The chain runs to 176 residues: NAD(P)H-quinone oxidoreductase subunit I, chloroplastic (176 aa).

2 4Fe-4S ferredoxin-type domains span residues 55–84 and 95–124; these read GRIHFEFDKCIACEVCVRVCPIDLPVVDWE and LNYSIDFGICIFCGNCVEYCPTNCLSMTEE. Residues Cys-64, Cys-67, Cys-70, Cys-74, Cys-104, Cys-107, Cys-110, and Cys-114 each contribute to the [4Fe-4S] cluster site.

This sequence belongs to the complex I 23 kDa subunit family. In terms of assembly, NDH is composed of at least 16 different subunits, 5 of which are encoded in the nucleus. [4Fe-4S] cluster serves as cofactor.

Its subcellular location is the plastid. The protein localises to the chloroplast thylakoid membrane. It carries out the reaction a plastoquinone + NADH + (n+1) H(+)(in) = a plastoquinol + NAD(+) + n H(+)(out). The catalysed reaction is a plastoquinone + NADPH + (n+1) H(+)(in) = a plastoquinol + NADP(+) + n H(+)(out). In terms of biological role, NDH shuttles electrons from NAD(P)H:plastoquinone, via FMN and iron-sulfur (Fe-S) centers, to quinones in the photosynthetic chain and possibly in a chloroplast respiratory chain. The immediate electron acceptor for the enzyme in this species is believed to be plastoquinone. Couples the redox reaction to proton translocation, and thus conserves the redox energy in a proton gradient. This is NAD(P)H-quinone oxidoreductase subunit I, chloroplastic from Populus alba (White poplar).